The sequence spans 117 residues: Immunoglobulin kappa variable 9-129 (117 aa).

The first 22 residues, 1-22 (MDMRAPAQVFGFLLLWFPGARC), serve as a signal peptide directing secretion. The segment at 23–45 (DIQMTQSPSSLSASLGERVSLTC) is framework-1. C45 and C110 are disulfide-bonded. Residues 46–56 (RASQDIHGYLN) are complementarity-determining-1. Positions 57–71 (LFQQKPGETIKHLIY) are framework-2. The interval 72–78 (ETSNLDS) is complementarity-determining-2. The tract at residues 79–110 (GVPKRFSGSRSGSDYSLIIGSLESEDFADYYC) is framework-3. The tract at residues 111–117 (LQYASSP) is complementarity-determining-3.

This is Immunoglobulin kappa variable 9-129 from Mus musculus (Mouse).